The chain runs to 326 residues: Transcription factor MYB16 (326 aa).

HTH myb-type domains are found at residues 9 to 61 (KLGL…TNYL) and 62 to 116 (RPDI…KKRL). 2 DNA-binding regions (H-T-H motif) span residues 37 to 61 (WRSL…TNYL) and 89 to 112 (WSAI…NTHL). Disordered regions lie at residues 197–217 (NWTT…STVS) and 280–299 (DRSF…GGDC). The span at 208–217 (QLESPTSTVS) shows a compositional bias: polar residues. Over residues 280 to 290 (DRSFSGDKNET) the composition is skewed to basic and acidic residues.

Expressed in trichomes, epidermis and mesophyll cells of young leaves, stems, petals, sepals, carpels and stamens.

It localises to the nucleus. Its function is as follows. Involved in the control of epidermal cell morphogenesis in petals. Promotes unidirectional cell expansion once outgrowth has been initiated. Coordinately with WIN1/SHN1, participates in the regulation of cuticle biosynthesis and wax accumulation in reproductive organs and trichomes. Functions in cuticle nanoridge formation in petals and stamens, and in morphogenesis of petal conical cells and trichomes. Functions as a major regulator of cuticle formation in vegetative organs by regulating the cuticle biosynthesis genes CYP86A8/LCR and CER1. This Arabidopsis thaliana (Mouse-ear cress) protein is Transcription factor MYB16.